A 427-amino-acid chain; its full sequence is 3-phosphoshikimate 1-carboxyvinyltransferase (427 aa).

The 3-phosphoshikimate site is built by K22, S23, and R27. Position 22 (K22) interacts with phosphoenolpyruvate. Phosphoenolpyruvate contacts are provided by G96 and R124. Residues S169, S170, Q171, S197, D313, N336, and K340 each coordinate 3-phosphoshikimate. Q171 serves as a coordination point for phosphoenolpyruvate. Residue D313 is the Proton acceptor of the active site. Phosphoenolpyruvate-binding residues include R344, R386, and K411.

Belongs to the EPSP synthase family. As to quaternary structure, monomer.

Its subcellular location is the cytoplasm. The catalysed reaction is 3-phosphoshikimate + phosphoenolpyruvate = 5-O-(1-carboxyvinyl)-3-phosphoshikimate + phosphate. It functions in the pathway metabolic intermediate biosynthesis; chorismate biosynthesis; chorismate from D-erythrose 4-phosphate and phosphoenolpyruvate: step 6/7. Catalyzes the transfer of the enolpyruvyl moiety of phosphoenolpyruvate (PEP) to the 5-hydroxyl of shikimate-3-phosphate (S3P) to produce enolpyruvyl shikimate-3-phosphate and inorganic phosphate. This is 3-phosphoshikimate 1-carboxyvinyltransferase from Salmonella choleraesuis (strain SC-B67).